The following is a 66-amino-acid chain: Toxin NaTx-4 (66 aa).

The 64-residue stretch at 1–64 folds into the LCN-type CS-alpha/beta domain; sequence KEGYLVNKET…TFPIPGKTCS (64 aa). 4 cysteine pairs are disulfide-bonded: C12/C63, C16/C39, C25/C44, and C29/C46.

It belongs to the long (4 C-C) scorpion toxin superfamily. Sodium channel inhibitor family. Expressed by the venom gland.

It localises to the secreted. Probable sodium channel inhibitor. The protein is Toxin NaTx-4 of Centruroides sculpturatus (Arizona bark scorpion).